The following is a 686-amino-acid chain: ATP-dependent zinc metalloprotease FtsH 2 (686 aa).

The Cytoplasmic segment spans residues methionine 1–asparagine 11. A helical transmembrane segment spans residues phenylalanine 12–methionine 32. Topologically, residues methionine 33–phenylalanine 178 are extracellular. Residues glycine 179–isoleucine 199 traverse the membrane as a helical segment. Residues tyrosine 200–lysine 686 are Cytoplasmic-facing. Residue glycine 272–threonine 279 coordinates ATP. Histidine 493 contacts Zn(2+). Residue glutamate 494 is part of the active site. The Zn(2+) site is built by histidine 497 and aspartate 569.

The protein in the central section; belongs to the AAA ATPase family. In the C-terminal section; belongs to the peptidase M41 family. In terms of assembly, homohexamer. The cofactor is Zn(2+).

The protein localises to the cell membrane. Acts as a processive, ATP-dependent zinc metallopeptidase for both cytoplasmic and membrane proteins. Plays a role in the quality control of integral membrane proteins. In Phytoplasma mali (strain AT), this protein is ATP-dependent zinc metalloprotease FtsH 2.